Here is a 139-residue protein sequence, read N- to C-terminus: Putative pre-16S rRNA nuclease (139 aa).

The protein belongs to the YqgF nuclease family.

Its subcellular location is the cytoplasm. Its function is as follows. Could be a nuclease involved in processing of the 5'-end of pre-16S rRNA. The polypeptide is Putative pre-16S rRNA nuclease (Streptococcus pyogenes serotype M3 (strain ATCC BAA-595 / MGAS315)).